Reading from the N-terminus, the 386-residue chain is Chaperone protein DnaJ (386 aa).

In terms of domain architecture, J spans 4–68 (NFYDVLGVSR…QKRQQYDQLG (65 aa)). Basic and acidic residues-rich tracts occupy residues 22–35 (KAYRKQAAEHHPDV) and 43–79 (ERFKAIQKAKEVLTDEQKRQQYDQLGHDRFTEADKRG). The tract at residues 22–132 (KAYRKQAAEH…GGNRPRQGQD (111 aa)) is disordered. Composition is skewed to gly residues over residues 80–104 (ATGGGGPGGAGGPFGGAGGAGGAGG) and 113–125 (FGGGGGRGGGGGN). The CR-type zinc finger occupies 147–229 (GATKEVTLTR…CGGDGVVREE (83 aa)). Positions 160, 163, 177, 180, 203, 206, 217, and 220 each coordinate Zn(2+). CXXCXGXG motif repeat units lie at residues 160 to 167 (CDTCDGAG), 177 to 184 (CSQCNGRG), 203 to 210 (CPRCEGSG), and 217 to 224 (CADCGGDG).

This sequence belongs to the DnaJ family. As to quaternary structure, homodimer. Zn(2+) is required as a cofactor.

The protein localises to the cytoplasm. Participates actively in the response to hyperosmotic and heat shock by preventing the aggregation of stress-denatured proteins and by disaggregating proteins, also in an autonomous, DnaK-independent fashion. Unfolded proteins bind initially to DnaJ; upon interaction with the DnaJ-bound protein, DnaK hydrolyzes its bound ATP, resulting in the formation of a stable complex. GrpE releases ADP from DnaK; ATP binding to DnaK triggers the release of the substrate protein, thus completing the reaction cycle. Several rounds of ATP-dependent interactions between DnaJ, DnaK and GrpE are required for fully efficient folding. Also involved, together with DnaK and GrpE, in the DNA replication of plasmids through activation of initiation proteins. The chain is Chaperone protein DnaJ from Halorubrum lacusprofundi (strain ATCC 49239 / DSM 5036 / JCM 8891 / ACAM 34).